The primary structure comprises 206 residues: Purine nucleoside phosphorylase aq_167 (206 aa).

Zn(2+)-binding residues include His42, Cys78, and His93.

It belongs to the purine nucleoside phosphorylase YfiH/LACC1 family. In terms of assembly, homodimer. Cu(2+) serves as cofactor. It depends on Zn(2+) as a cofactor.

It carries out the reaction adenosine + phosphate = alpha-D-ribose 1-phosphate + adenine. The enzyme catalyses S-methyl-5'-thioadenosine + phosphate = 5-(methylsulfanyl)-alpha-D-ribose 1-phosphate + adenine. It catalyses the reaction inosine + phosphate = alpha-D-ribose 1-phosphate + hypoxanthine. The catalysed reaction is adenosine + H2O + H(+) = inosine + NH4(+). Purine nucleoside enzyme that catalyzes the phosphorolysis of adenosine and inosine nucleosides, yielding D-ribose 1-phosphate and the respective free bases, adenine and hypoxanthine. Also catalyzes the phosphorolysis of S-methyl-5'-thioadenosine into adenine and S-methyl-5-thio-alpha-D-ribose 1-phosphate. Also has adenosine deaminase activity. The protein is Purine nucleoside phosphorylase aq_167 of Aquifex aeolicus (strain VF5).